The following is a 281-amino-acid chain: Splicing regulator RBM11 (281 aa).

Positions 10-87 (RTVFVGNLEA…RPINVQYRFG (78 aa)) constitute an RRM domain. Residues 184 to 281 (PSSYKWTHQQ…FRKSKKKKRY (98 aa)) form a disordered region. Composition is skewed to polar residues over residues 187 to 217 (YKWT…SSLN) and 229 to 242 (YKWT…SDLY). Positions 245–280 (NKRKRQKQTSDSDSSTDNNRGNECSQKFRKSKKKKR) match the Bipartite nuclear localization signal motif. A compositionally biased stretch (basic residues) spans 271–281 (KFRKSKKKKRY).

As to quaternary structure, homodimer. As to expression, expressed in brain, hippocampus, prefrontal cortex, cerebellum, spinal cord, testis, mammary gland, spleen and kidney. Also expressed in fetal brain.

The protein resides in the nucleus. The protein localises to the nucleoplasm. It localises to the nucleus speckle. Functionally, tissue-specific splicing factor with potential implication in the regulation of alternative splicing during neuron and germ cell differentiation. Antagonizes SRSF1-mediated BCL-X splicing. May affect the choice of alternative 5' splice sites by binding to specific sequences in exons and antagonizing the SR protein SRSF1. This is Splicing regulator RBM11 from Homo sapiens (Human).